Reading from the N-terminus, the 428-residue chain is Enolase (428 aa).

Q164 contacts (2R)-2-phosphoglycerate. E206 functions as the Proton donor in the catalytic mechanism. The Mg(2+) site is built by D243, E286, and D313. (2R)-2-phosphoglycerate is bound by residues K338, R367, S368, and K389. K338 (proton acceptor) is an active-site residue.

This sequence belongs to the enolase family. Mg(2+) serves as cofactor.

It is found in the cytoplasm. The protein localises to the secreted. It localises to the cell surface. The catalysed reaction is (2R)-2-phosphoglycerate = phosphoenolpyruvate + H2O. It participates in carbohydrate degradation; glycolysis; pyruvate from D-glyceraldehyde 3-phosphate: step 4/5. Functionally, catalyzes the reversible conversion of 2-phosphoglycerate (2-PG) into phosphoenolpyruvate (PEP). It is essential for the degradation of carbohydrates via glycolysis. This is Enolase from Dehalococcoides mccartyi (strain ATCC BAA-2266 / KCTC 15142 / 195) (Dehalococcoides ethenogenes (strain 195)).